We begin with the raw amino-acid sequence, 141 residues long: Hemoglobin subunit alpha-D (141 aa).

The region spanning 1–141 (VLTAEDRRLL…VADVLSEKYR (141 aa)) is the Globin domain. The heme b site is built by histidine 57 and histidine 87.

It belongs to the globin family. As to quaternary structure, the deoxy-Hb is a heterotetramer of two alpha and two beta chains, but oxygenation results in dissociation to dimers. Red blood cells.

Involved in oxygen transport from the lung to the various peripheral tissues. This is Hemoglobin subunit alpha-D (HBAD) from Erythrolamprus miliaris (South American water snake).